The following is a 289-amino-acid chain: Shikimate kinase (289 aa).

84 to 94 (PMASGLSSSSA) serves as a coordination point for ATP.

The protein belongs to the GHMP kinase family. Archaeal shikimate kinase subfamily.

It localises to the cytoplasm. The catalysed reaction is shikimate + ATP = 3-phosphoshikimate + ADP + H(+). The protein operates within metabolic intermediate biosynthesis; chorismate biosynthesis; chorismate from D-erythrose 4-phosphate and phosphoenolpyruvate: step 5/7. This chain is Shikimate kinase, found in Methanobrevibacter smithii (strain ATCC 35061 / DSM 861 / OCM 144 / PS).